A 492-amino-acid chain; its full sequence is Cytochrome P450 26A1 (492 aa).

Residue Cys-438 participates in heme binding.

This sequence belongs to the cytochrome P450 family. It depends on heme as a cofactor.

It localises to the endoplasmic reticulum membrane. The protein localises to the microsome membrane. It catalyses the reaction all-trans-retinoate + reduced [NADPH--hemoprotein reductase] + O2 = all-trans-(4S)-hydroxyretinoate + oxidized [NADPH--hemoprotein reductase] + H2O + H(+). Its function is as follows. A cytochrome P450 monooxygenase involved in the metabolism of all-trans retinoic acid (atRA), a signaling molecule that binds to retinoic acid receptors and regulates gene transcription. Mechanistically, uses molecular oxygen inserting one oxygen atom into a substrate, and reducing the second into a water molecule, with two electrons provided by NADPH via cytochrome P450 reductase (CPR; NADPH-ferrihemoprotein reductase). Catalyzes the hydroxylation of carbon hydrogen bonds of atRA primarily at C-4. Has no activity toward 9-cis and 13-cis retinoic acid stereoisomers. May play a role in the oxidative metabolism of xenobiotics such as tazarotenic acid. This Danio rerio (Zebrafish) protein is Cytochrome P450 26A1 (cyp26a1).